We begin with the raw amino-acid sequence, 216 residues long: Pyridoxine/pyridoxamine 5'-phosphate oxidase (216 aa).

FMN is bound by residues 64–69 (RVVLLK), 79–80 (FT), K85, K86, and Q108. A substrate-binding site is contributed by K69. Residues Y126, R130, and S134 each contribute to the substrate site. FMN contacts are provided by residues 143 to 144 (QS) and W188. 194-196 (RKH) is a substrate binding site. R198 lines the FMN pocket.

Belongs to the pyridoxamine 5'-phosphate oxidase family. In terms of assembly, homodimer. It depends on FMN as a cofactor.

It catalyses the reaction pyridoxamine 5'-phosphate + O2 + H2O = pyridoxal 5'-phosphate + H2O2 + NH4(+). The catalysed reaction is pyridoxine 5'-phosphate + O2 = pyridoxal 5'-phosphate + H2O2. Its pathway is cofactor metabolism; pyridoxal 5'-phosphate salvage; pyridoxal 5'-phosphate from pyridoxamine 5'-phosphate: step 1/1. It participates in cofactor metabolism; pyridoxal 5'-phosphate salvage; pyridoxal 5'-phosphate from pyridoxine 5'-phosphate: step 1/1. Its function is as follows. Catalyzes the oxidation of either pyridoxine 5'-phosphate (PNP) or pyridoxamine 5'-phosphate (PMP) into pyridoxal 5'-phosphate (PLP). The protein is Pyridoxine/pyridoxamine 5'-phosphate oxidase of Wolbachia pipientis wMel.